The sequence spans 496 residues: Coiled-coil domain-containing protein 77 (496 aa).

The disordered stretch occupies residues 1 to 42 (MDFSPPHGLRGGRSPSLQDTTISSSHTQKNGGDSTPLPPINE). Polar residues predominate over residues 15–33 (PSLQDTTISSSHTQKNGGD). Positions 51–113 (RELLEYYRKK…KALSDMQVYL (63 aa)) form a coiled coil. A disordered region spans residues 170-208 (QRTVQSGDPFDRKVQRSGRAGVKQVPLKAPGKQDRTKAA). The stretch at 214–495 (QILLLQVEAL…IYGLENELRI (282 aa)) forms a coiled coil.

This is Coiled-coil domain-containing protein 77 (ccdc77) from Xenopus laevis (African clawed frog).